Reading from the N-terminus, the 394-residue chain is Aspergillopepsin-1 (394 aa).

The signal sequence occupies residues 1–20; that stretch reads MVVFSKTAALVLGLSSAVSA. The propeptide at 21-69 is activation peptide; the sequence is APAPTRKGFTINQIARPANKTRTINLPGMYARSLAKFGGTVPQSVKEAA. The 307-residue stretch at 85-391 folds into the Peptidase A1 domain; sequence YLTPVTVGKS…NSEGPKLGFA (307 aa). Residues Asp-101 and Asp-283 contribute to the active site. Cys-319 and Cys-354 form a disulfide bridge.

Belongs to the peptidase A1 family. As to quaternary structure, monomer.

Its subcellular location is the secreted. It catalyses the reaction Hydrolysis of proteins with broad specificity. Generally favors hydrophobic residues in P1 and P1', but also accepts Lys in P1, which leads to activation of trypsinogen. Does not clot milk.. Secreted aspartic endopeptidase that allows assimilation of proteinaceous substrates. The scissile peptide bond is attacked by a nucleophilic water molecule activated by two aspartic residues in the active site. Shows a broad primary substrate specificity. Favors hydrophobic residues at the P1 and P1' positions, but also accepts a lysine residue in the P1 position, leading to the activation of trypsinogen and chymotrypsinogen A. The sequence is that of Aspergillopepsin-1 (pepA) from Aspergillus niger (strain ATCC MYA-4892 / CBS 513.88 / FGSC A1513).